The primary structure comprises 393 residues: PGA synthase CapB (393 aa).

Requires Mn(2+) as cofactor.

Functionally, catalyzes the biosynthesis of PGA (gamma-polyglutamic acid) from L-glutamate. Both the 44-kDa and the 33-kDa forms are required for PGA synthesis. The sequence is that of PGA synthase CapB (capB) from Bacillus subtilis (strain 168).